We begin with the raw amino-acid sequence, 499 residues long: IFTAFSLLFSLFIFLLTRKPKSKTPNLPPGPPGWPIVGNLFQVAGSGKQFFEYIRDLKPKYGSIFTLKMGSRTMIIVASAELAHEALIQKGQIFASRPRENPTRTIFSCNKFSVNAAVYGPVWRSLRRNMVQNMLSPSRLKEFREFREIAMDKLIERIRVDAKENNDVVWALKNARFAVFYILVAMCFGVEMDNEEMIERVDQMMKDVLIVLDPRIDDFLPILRLFVGYKQRKRVNEVRKRQIETLVPLIEKRRSVVQNPGSDKTAASFSYLDTLFDVKVEGRKSGPTNAELVTLCSEFLNGGTDTTATALEWGIGRLMENPTIQNQLYQEIKTIVGDKKVDENDIEKMPYLNAVVKELLRKHPPTYFTLTHSVTEPVKLAGYDIPMDTNVEFFVHGISHDPNVWSDPEKFDPDRFLSGREDADITGVKEVKMMPFGVGRRICPGLGMATVHVNLMLARMVQEFEWFAYPGNNKVDFSEKLEFTVVMKNPLRAKVKLRI.

C443 is a heme binding site.

Belongs to the cytochrome P450 family. Heme is required as a cofactor.

The sequence is that of Cytochrome P450 77A1 (CYP77A1) from Solanum melongena (Eggplant).